The following is a 402-amino-acid chain: Arginine biosynthesis bifunctional protein ArgJ (402 aa).

Residues T152, K178, T189, E275, N397, and T402 each coordinate substrate. The Nucleophile role is filled by T189.

It belongs to the ArgJ family. In terms of assembly, heterotetramer of two alpha and two beta chains.

It is found in the cytoplasm. It carries out the reaction N(2)-acetyl-L-ornithine + L-glutamate = N-acetyl-L-glutamate + L-ornithine. The enzyme catalyses L-glutamate + acetyl-CoA = N-acetyl-L-glutamate + CoA + H(+). It functions in the pathway amino-acid biosynthesis; L-arginine biosynthesis; L-ornithine and N-acetyl-L-glutamate from L-glutamate and N(2)-acetyl-L-ornithine (cyclic): step 1/1. Its pathway is amino-acid biosynthesis; L-arginine biosynthesis; N(2)-acetyl-L-ornithine from L-glutamate: step 1/4. Catalyzes two activities which are involved in the cyclic version of arginine biosynthesis: the synthesis of N-acetylglutamate from glutamate and acetyl-CoA as the acetyl donor, and of ornithine by transacetylation between N(2)-acetylornithine and glutamate. This Symbiobacterium thermophilum (strain DSM 24528 / JCM 14929 / IAM 14863 / T) protein is Arginine biosynthesis bifunctional protein ArgJ.